Reading from the N-terminus, the 232-residue chain is Thiamine import ATP-binding protein ThiQ (232 aa).

Residues 2 to 230 (LKLTDITWLY…KASASAILGI (229 aa)) enclose the ABC transporter domain. Position 32–39 (32–39 (GPSGAGKS)) interacts with ATP.

It belongs to the ABC transporter superfamily. Thiamine importer (TC 3.A.1.19.1) family. In terms of assembly, the complex is composed of two ATP-binding proteins (ThiQ), two transmembrane proteins (ThiP) and a solute-binding protein (ThiB).

The protein resides in the cell inner membrane. It carries out the reaction thiamine(out) + ATP + H2O = thiamine(in) + ADP + phosphate + H(+). In terms of biological role, part of the ABC transporter complex ThiBPQ involved in thiamine import. Responsible for energy coupling to the transport system. This Shigella boydii serotype 4 (strain Sb227) protein is Thiamine import ATP-binding protein ThiQ.